A 599-amino-acid chain; its full sequence is Endo-1,4-beta-xylanase B (599 aa).

Residues 1-37 (MTISASDYRHPGNFLKRTTALLCVGTALTALAFNASA) form the signal peptide. Residues 38-136 (ACTYTIDSEW…TVTGAACNSA (99 aa)) form the CBM2 domain. The cysteines at positions 39 and 133 are disulfide-linked. Residues 163-289 (LLQEAQAGFC…LPNIDSLSVV (127 aa)) form the CBM6 domain. The 281-residue stretch at 315-595 (SSSAASAKKF…RPAMTWLINN (281 aa)) folds into the GH10 domain. Glu-431 serves as the catalytic Proton donor. Catalysis depends on Glu-530, which acts as the Nucleophile.

It belongs to the glycosyl hydrolase 10 (cellulase F) family.

It carries out the reaction Endohydrolysis of (1-&gt;4)-beta-D-xylosidic linkages in xylans.. The protein operates within glycan metabolism; hemicellulose degradation. Xylanase B contributes to hydrolyze hemicellulose, the major component of plant cell-walls. The sequence is that of Endo-1,4-beta-xylanase B (xynB) from Cellvibrio japonicus (strain Ueda107) (Pseudomonas fluorescens subsp. cellulosa).